A 211-amino-acid chain; its full sequence is Endonuclease V (211 aa).

Aspartate 37 and aspartate 102 together coordinate Mg(2+).

It belongs to the endonuclease V family. Mg(2+) serves as cofactor.

Its subcellular location is the cytoplasm. The enzyme catalyses Endonucleolytic cleavage at apurinic or apyrimidinic sites to products with a 5'-phosphate.. Its function is as follows. DNA repair enzyme involved in the repair of deaminated bases. Selectively cleaves double-stranded DNA at the second phosphodiester bond 3' to a deoxyinosine leaving behind the intact lesion on the nicked DNA. This chain is Endonuclease V, found in Ignicoccus hospitalis (strain KIN4/I / DSM 18386 / JCM 14125).